The primary structure comprises 380 residues: Endonuclease III homolog 2 (380 aa).

The Nuclear localization signal signature appears at 8-12 (RKRKH). An interaction with MLH1 region spans residues 15–40 (VDIEEVEVRSKYFKKNERTVELVKEN). Residue Lys194 forms a Glycyl lysine isopeptide (Lys-Gly) (interchain with G-Cter in SUMO) linkage. Residues 228 to 252 (FDSDIPYDIEGILSLPGVGPKMGYL) enclose the HhH domain. Lys248 (nucleophile; for N-glycosylase activity) is an active-site residue. 4 residues coordinate [4Fe-4S] cluster: Cys319, Cys326, Cys329, and Cys335. The Nuclear localization signal motif lies at 376–380 (RHKKK).

The protein belongs to the Nth/MutY family. In terms of assembly, interacts with MLH1. [4Fe-4S] cluster is required as a cofactor. Monosumoylated.

It localises to the nucleus. It catalyses the reaction 2'-deoxyribonucleotide-(2'-deoxyribose 5'-phosphate)-2'-deoxyribonucleotide-DNA = a 3'-end 2'-deoxyribonucleotide-(2,3-dehydro-2,3-deoxyribose 5'-phosphate)-DNA + a 5'-end 5'-phospho-2'-deoxyribonucleoside-DNA + H(+). Bifunctional DNA N-glycosylase with associated apurinic/apyrimidinic (AP) lyase function that catalyzes the first step in base excision repair (BER), the primary repair pathway for the repair of oxidative DNA damage. The DNA N-glycosylase activity releases the damaged DNA base from DNA by cleaving the N-glycosidic bond, leaving an AP site. The AP-lyase activity cleaves the phosphodiester bond 3' to the AP site by a beta-elimination. Primarily recognizes and repairs oxidative base damage of pyrimidines, but also purine-derived lesions, alkylation damage as well as abasic sites. Can also repair the oxidation products of 8-oxoguanine. The sequence is that of Endonuclease III homolog 2 (NTG2) from Saccharomyces cerevisiae (strain ATCC 204508 / S288c) (Baker's yeast).